The primary structure comprises 334 residues: Trans-1,2-dihydrobenzene-1,2-diol dehydrogenase (334 aa).

The protein belongs to the Gfo/Idh/MocA family. In terms of assembly, homodimer. Small intestine.

It catalyses the reaction (1R,2R)-1,2-dihydrobenzene-1,2-diol + NADP(+) = catechol + NADPH + H(+). The enzyme catalyses D-xylose + NADP(+) = D-xylono-1,5-lactone + NADPH + H(+). The protein is Trans-1,2-dihydrobenzene-1,2-diol dehydrogenase (DHDH) of Homo sapiens (Human).